Consider the following 108-residue polypeptide: Glutaredoxin-1 (108 aa).

Residues 3 to 106 enclose the Glutaredoxin domain; the sequence is EEFVQQRLAN…DILSSIGVLR (104 aa). Cys23 and Cys26 are joined by a disulfide.

This sequence belongs to the glutaredoxin family.

The protein localises to the virion. Functionally, has thioltransferase and dehydroascorbate reductase activities. This Ectromelia virus (strain Moscow) (ECTV) protein is Glutaredoxin-1 (OPG075).